The chain runs to 117 residues: V-type sodium ATPase subunit F (117 aa).

The tract at residues methionine 1–glutamate 20 is disordered. Residues arginine 7–glutamate 20 are compositionally biased toward basic and acidic residues.

The protein belongs to the V-ATPase G subunit family.

Functionally, involved in ATP-driven sodium extrusion. The protein is V-type sodium ATPase subunit F (ntpF) of Enterococcus hirae (strain ATCC 9790 / DSM 20160 / JCM 8729 / LMG 6399 / NBRC 3181 / NCIMB 6459 / NCDO 1258 / NCTC 12367 / WDCM 00089 / R).